Here is a 376-residue protein sequence, read N- to C-terminus: NIF3-like protein 1 (376 aa).

Lysine 108 bears the N6-acetyllysine mark. The tract at residues leucine 243–valine 376 is mediates interaction with COPS2. Residue threonine 254 is modified to Phosphothreonine. Serine 258 bears the Phosphoserine mark.

It belongs to the GTP cyclohydrolase I type 2/NIF3 family. In terms of assembly, homodimer. Interacts with COPS2. Interacts with THOC7. In terms of tissue distribution, ubiquitous. Detected in all tissues tested with higher expression in cerebellum, heart and kidney and to a lower level in cerebrum, lung, liver, spleen and muscle.

The protein localises to the cytoplasm. It is found in the nucleus. Its function is as follows. May function as a transcriptional corepressor through its interaction with COPS2, negatively regulating the expression of genes involved in neuronal differentiation. This chain is NIF3-like protein 1, found in Mus musculus (Mouse).